A 524-amino-acid chain; its full sequence is Na(+)/H(+) antiporter NhaB (524 aa).

Helical transmembrane passes span 23–43 (LAIIAFLIINPLVFFFVSPFV), 45–65 (GWMLVIEFIFTLAMALKCYPL), 98–118 (LLLIFMVAGIYFMKQLLLFIF), 136–156 (CVASAFLSAFLDALTVIAVVI), 203–223 (LMMHAGVGTALGGVMTMVGEP), 239–259 (FFMRMLPVTLPVLCCGLLVCI), 304–324 (ALIGVWLVIALALHLAEVGLV), 325–345 (GLSVIILATSFCGITNEHALG), 358–378 (LTVFFAVVAVIIEQSLFTPII), 392–412 (LFYLFNGLLSSVSDNVFVGTV), 420–440 (AFELGVISLQQFELLAVAINT), 448–468 (ATPNGQAAFLFLLTSALAPLI), and 479–499 (ALPYTIVMTGVGLLGVEYLLV).

It belongs to the NhaB Na(+)/H(+) (TC 2.A.34) antiporter family.

It localises to the cell inner membrane. The enzyme catalyses 2 Na(+)(in) + 3 H(+)(out) = 2 Na(+)(out) + 3 H(+)(in). Its function is as follows. Na(+)/H(+) antiporter that extrudes sodium in exchange for external protons. The sequence is that of Na(+)/H(+) antiporter NhaB from Yersinia enterocolitica serotype O:8 / biotype 1B (strain NCTC 13174 / 8081).